Consider the following 275-residue polypeptide: MSSALAPVGIFDSGVGGLTVARAIIDQLPDEHIIYVGDTGHGPYGPLSIPEVRAHALAIGDDLVGRGVKALVIACNTASAACLRDARERYEVPVVEVILPAVRRAVATTRNGRIGVIGTQATINSHAYQDAFAAARDTEITAVACPRFVDFVERGVTSGRQVLGLAEGYLEPLQRAQVDTLVLGCTHYPLLSGLIQLAMGDNVTLVSSAEETAKEVLRVLAERDLLHPHPDDPRAAGPSRVFEATGDPEAFTRLAARFLGPAVSGVRPVHHVRID.

Substrate-binding positions include 12–13 (DS) and 44–45 (YG). Cys75 serves as the catalytic Proton donor/acceptor. 76–77 (NT) is a substrate binding site. The Proton donor/acceptor role is filled by Cys185. 186-187 (TH) is a binding site for substrate.

The protein belongs to the aspartate/glutamate racemases family.

It carries out the reaction L-glutamate = D-glutamate. It participates in cell wall biogenesis; peptidoglycan biosynthesis. Provides the (R)-glutamate required for cell wall biosynthesis. This Mycolicibacterium paratuberculosis (strain ATCC BAA-968 / K-10) (Mycobacterium paratuberculosis) protein is Glutamate racemase.